The following is a 481-amino-acid chain: Putative cytochrome P450 520B1 (481 aa).

C427 is a heme binding site.

It belongs to the cytochrome P450 family. The cofactor is heme.

This Dictyostelium discoideum (Social amoeba) protein is Putative cytochrome P450 520B1 (cyp520B1).